A 532-amino-acid chain; its full sequence is Maternal protein exuperantia (532 aa).

Disordered stretches follow at residues 206 to 251 (CSAS…NAVQ) and 403 to 491 (TVKP…NGLK). 2 stretches are compositionally biased toward low complexity: residues 220–231 (GSSMVSDSVSIS) and 404–417 (VKPVVKGNSNNNNN). The span at 454-467 (SVSSLPDSTTKTPS) shows a compositional bias: polar residues. A Phosphoserine modification is found at serine 467.

Component of the osk RNP complex, which is composed of at least exuperantia (exu), ypsilon schachtel (yps), aret (bruno), cup, and the mRNA of osk. In the sponge body, forms a ribonucleoprotein complex (RNP) containing at least me31B, exu, yps and the mRNA of osk; interactions with exu and yps are RNA dependent.

The protein localises to the cytoplasm. It is found in the cytoplasmic ribonucleoprotein granule. Functionally, ensures the proper localization of the mRNA of the bicoid gene to the anterior regions of the oocyte thus playing a fundamental role in the establishment of the polarity of the oocyte. May bind the bcd mRNA. This Drosophila melanogaster (Fruit fly) protein is Maternal protein exuperantia (exu).